Here is a 253-residue protein sequence, read N- to C-terminus: 2-dehydro-3-deoxy-D-gluconate 5-dehydrogenase (253 aa).

14 to 38 (LITGCDTGLGQGMAVGLAEAGCDIV) serves as a coordination point for NAD(+). Substrate is bound at residue S145. Y158 serves as the catalytic Proton acceptor.

It belongs to the short-chain dehydrogenases/reductases (SDR) family.

It carries out the reaction 2-dehydro-3-deoxy-D-gluconate + NAD(+) = 3-deoxy-D-glycero-2,5-hexodiulosonate + NADH + H(+). It participates in glycan metabolism; pectin degradation; 2-dehydro-3-deoxy-D-gluconate from pectin: step 5/5. Catalyzes the reduction of 2,5-diketo-3-deoxygluconate (DKII or 4,6-dihydroxy-2,5-dioxohexanoate) into 2-keto-3-deoxygluconate (KDG or 2-dehydro-3-deoxygluconate) with a concomitant oxidation of NADH. This chain is 2-dehydro-3-deoxy-D-gluconate 5-dehydrogenase (kduD), found in Dickeya dadantii (strain 3937) (Erwinia chrysanthemi (strain 3937)).